The sequence spans 382 residues: S-adenosylmethionine synthase (382 aa).

Histidine 15 serves as a coordination point for ATP. Mg(2+) is bound at residue aspartate 17. Glutamate 43 contributes to the K(+) binding site. The L-methionine site is built by glutamate 56 and glutamine 99. Residues 99-109 are flexible loop; it reads QSGDIAQGVDR. ATP-binding positions include 164 to 166, 230 to 231, aspartate 239, 245 to 246, alanine 262, and lysine 266; these read DAK, KF, and RK. Position 239 (aspartate 239) interacts with L-methionine. Position 270 (lysine 270) interacts with L-methionine.

It belongs to the AdoMet synthase family. As to quaternary structure, homotetramer; dimer of dimers. The cofactor is Mg(2+). K(+) serves as cofactor.

It is found in the cytoplasm. The enzyme catalyses L-methionine + ATP + H2O = S-adenosyl-L-methionine + phosphate + diphosphate. It functions in the pathway amino-acid biosynthesis; S-adenosyl-L-methionine biosynthesis; S-adenosyl-L-methionine from L-methionine: step 1/1. In terms of biological role, catalyzes the formation of S-adenosylmethionine (AdoMet) from methionine and ATP. The overall synthetic reaction is composed of two sequential steps, AdoMet formation and the subsequent tripolyphosphate hydrolysis which occurs prior to release of AdoMet from the enzyme. The sequence is that of S-adenosylmethionine synthase from Dichelobacter nodosus (strain VCS1703A).